The following is a 921-amino-acid chain: Translation initiation factor IF-2 (921 aa).

The interval 1-296 (MADNNTPGDK…PGPQKQRGRL (296 aa)) is disordered. Positions 80 to 89 (RPSGPRPGSS) are enriched in low complexity. The span at 116–182 (ARVRDMEERR…AKKRFGEGEA (67 aa)) shows a compositional bias: basic and acidic residues. Residues 183-257 (PRPATAAPQQ…LGRAPGVAAG (75 aa)) are compositionally biased toward low complexity. A tr-type G domain is found at 417–586 (PRSPVVTVMG…MIALQADILD (170 aa)). A G1 region spans residues 426–433 (GHVDHGKT). 426 to 433 (GHVDHGKT) contributes to the GTP binding site. The segment at 451-455 (GITQH) is G2. A G3 region spans residues 474 to 477 (DTPG). GTP is bound by residues 474 to 478 (DTPGH) and 528 to 531 (NKID). The segment at 528-531 (NKID) is G4. The G5 stretch occupies residues 564 to 566 (SAK).

This sequence belongs to the TRAFAC class translation factor GTPase superfamily. Classic translation factor GTPase family. IF-2 subfamily.

It localises to the cytoplasm. Its function is as follows. One of the essential components for the initiation of protein synthesis. Protects formylmethionyl-tRNA from spontaneous hydrolysis and promotes its binding to the 30S ribosomal subunits. Also involved in the hydrolysis of GTP during the formation of the 70S ribosomal complex. The polypeptide is Translation initiation factor IF-2 (Bradyrhizobium sp. (strain BTAi1 / ATCC BAA-1182)).